We begin with the raw amino-acid sequence, 440 residues long: Glutamyl-tRNA(Gln) amidotransferase subunit D (440 aa).

The Asparaginase/glutaminase domain maps to 94-424; the sequence is PSVTILGTGG…KEVRRMMLTN (331 aa). Catalysis depends on residues Thr-104, Thr-180, Asp-181, and Lys-258.

Belongs to the asparaginase 1 family. GatD subfamily. Heterodimer of GatD and GatE.

It catalyses the reaction L-glutamyl-tRNA(Gln) + L-glutamine + ATP + H2O = L-glutaminyl-tRNA(Gln) + L-glutamate + ADP + phosphate + H(+). In terms of biological role, allows the formation of correctly charged Gln-tRNA(Gln) through the transamidation of misacylated Glu-tRNA(Gln) in organisms which lack glutaminyl-tRNA synthetase. The reaction takes place in the presence of glutamine and ATP through an activated gamma-phospho-Glu-tRNA(Gln). The GatDE system is specific for glutamate and does not act on aspartate. This Thermococcus kodakarensis (strain ATCC BAA-918 / JCM 12380 / KOD1) (Pyrococcus kodakaraensis (strain KOD1)) protein is Glutamyl-tRNA(Gln) amidotransferase subunit D.